We begin with the raw amino-acid sequence, 415 residues long: 3-isopropylmalate dehydratase large subunit (415 aa).

Residues Cys-295, Cys-353, and Cys-356 each contribute to the [4Fe-4S] cluster site.

The protein belongs to the aconitase/IPM isomerase family. LeuC type 2 subfamily. Heterodimer of LeuC and LeuD. Requires [4Fe-4S] cluster as cofactor.

It carries out the reaction (2R,3S)-3-isopropylmalate = (2S)-2-isopropylmalate. It participates in amino-acid biosynthesis; L-leucine biosynthesis; L-leucine from 3-methyl-2-oxobutanoate: step 2/4. Catalyzes the isomerization between 2-isopropylmalate and 3-isopropylmalate, via the formation of 2-isopropylmaleate. This is 3-isopropylmalate dehydratase large subunit from Pyrobaculum aerophilum (strain ATCC 51768 / DSM 7523 / JCM 9630 / CIP 104966 / NBRC 100827 / IM2).